We begin with the raw amino-acid sequence, 396 residues long: Phosphoglycerate kinase (396 aa).

Substrate is bound by residues 21 to 23, Arg-36, 59 to 62, Arg-118, and Arg-151; these read DFN and HLGR. Residues Lys-201, Gly-292, Glu-323, and 349-352 each bind ATP; that span reads GGDS.

The protein belongs to the phosphoglycerate kinase family. In terms of assembly, monomer.

It localises to the cytoplasm. It catalyses the reaction (2R)-3-phosphoglycerate + ATP = (2R)-3-phospho-glyceroyl phosphate + ADP. The protein operates within carbohydrate degradation; glycolysis; pyruvate from D-glyceraldehyde 3-phosphate: step 2/5. In Leptospira interrogans serogroup Icterohaemorrhagiae serovar copenhageni (strain Fiocruz L1-130), this protein is Phosphoglycerate kinase.